Consider the following 185-residue polypeptide: Ribosome-recycling factor (185 aa).

This sequence belongs to the RRF family.

It is found in the cytoplasm. In terms of biological role, responsible for the release of ribosomes from messenger RNA at the termination of protein biosynthesis. May increase the efficiency of translation by recycling ribosomes from one round of translation to another. The chain is Ribosome-recycling factor from Corynebacterium jeikeium (strain K411).